Consider the following 135-residue polypeptide: Fatty acid-binding protein homolog 6 (135 aa).

Residues Arg110 and 130–132 contribute to the a fatty acid site; that span reads REY.

It belongs to the calycin superfamily. Fatty-acid binding protein (FABP) family.

This chain is Fatty acid-binding protein homolog 6 (lbp-6), found in Caenorhabditis elegans.